A 670-amino-acid polypeptide reads, in one-letter code: Zinc finger protein 526 (670 aa).

3 C2H2-type zinc fingers span residues 57-79 (FMCSECGSLYNTLEEVLSHQEQH), 108-130 (FQCGECSQLILSPGELLAHQDAH), and 140-163 (YQCWDCQELFPSPELWVAHRKAQH). Disordered regions lie at residues 168–196 (VAEPPVPPPLPPPTPLPPPSPPSEVKMEP) and 217–304 (GTHF…ATHP). Pro residues predominate over residues 171–189 (PPVPPPLPPPTPLPPPSPP). The segment at 197-219 (YECPECSTLCATPEEFLEHQGTH) adopts a C2H2-type 4 zinc-finger fold. Basic and acidic residues predominate over residues 217–231 (GTHFDSLEKEERNGL). Acidic residues predominate over residues 232-263 (EEEEEDDEEDEEDDEEMEDEEAMAEVGDDAVG). 9 consecutive C2H2-type zinc fingers follow at residues 305-327 (FHCSQCQRSFSSANRLQAHGRAH), 332-354 (HECTTCSKVFKKAASLEQHLRLH), 360-382 (YLCVDCGRGFGTELTLVAHRRAH), 388-409 (HRCRCGKTFSNMTKFLYHRRTH), 442-465 (LPCPQCSKSFASASRLSRHRRAVH), 472-494 (HRCGVCGKGFKKLIHVRNHLRTH), 500-522 (FQCHSCGKTFASLANLSRHQLTH), 528-550 (YQCLDCGKRFTQSSNLQQHRRLH), and 573-595 (YYCGTCGRWFRAMAGLRLHQRVH). The tract at residues 409-443 (HAGKSGAPPTGATAPPAPAEPTPPPPPPAPPAQLP) is disordered. The segment covering 423 to 442 (PPAPAEPTPPPPPPAPPAQL) has biased composition (pro residues). Residues 601–621 (LTLQPPRSPSPAPPPPPEPQQ) form a disordered region. Positions 606-619 (PRSPSPAPPPPPEP) are enriched in pro residues.

Belongs to the krueppel C2H2-type zinc-finger protein family. In terms of tissue distribution, widely expressed.

It localises to the nucleus. In terms of biological role, may be involved in transcriptional regulation. This Homo sapiens (Human) protein is Zinc finger protein 526 (ZNF526).